Consider the following 262-residue polypeptide: Proteasome subunit alpha (262 aa).

The segment at 235-262 is disordered; sequence LLPTTGESDAGDSGADGSPSGDSPDTSA.

Belongs to the peptidase T1A family. The 20S proteasome core is composed of 14 alpha and 14 beta subunits that assemble into four stacked heptameric rings, resulting in a barrel-shaped structure. The two inner rings, each composed of seven catalytic beta subunits, are sandwiched by two outer rings, each composed of seven alpha subunits. The catalytic chamber with the active sites is on the inside of the barrel. Has a gated structure, the ends of the cylinder being occluded by the N-termini of the alpha-subunits. Is capped by the proteasome-associated ATPase, ARC.

The protein localises to the cytoplasm. Its pathway is protein degradation; proteasomal Pup-dependent pathway. The formation of the proteasomal ATPase ARC-20S proteasome complex, likely via the docking of the C-termini of ARC into the intersubunit pockets in the alpha-rings, may trigger opening of the gate for substrate entry. Interconversion between the open-gate and close-gate conformations leads to a dynamic regulation of the 20S proteasome proteolysis activity. Functionally, component of the proteasome core, a large protease complex with broad specificity involved in protein degradation. The chain is Proteasome subunit alpha from Gordonia bronchialis (strain ATCC 25592 / DSM 43247 / BCRC 13721 / JCM 3198 / KCTC 3076 / NBRC 16047 / NCTC 10667) (Rhodococcus bronchialis).